The following is a 437-amino-acid chain: Phenylacetate-coenzyme A ligase (437 aa).

It belongs to the phenylacetyl-CoA ligase family. In terms of assembly, monomer.

It catalyses the reaction 2-phenylacetate + ATP + CoA = phenylacetyl-CoA + AMP + diphosphate. Its pathway is aromatic compound metabolism; phenylacetate degradation. Catalyzes the activation of phenylacetic acid (PA) to phenylacetyl-CoA (PA-CoA). The protein is Phenylacetate-coenzyme A ligase (paaK) of Escherichia coli (strain K12).